The sequence spans 458 residues: Transcription factor bHLH10 (458 aa).

The disordered stretch occupies residues 1 to 49 (MEEERESLYEEMGCFDPNTPAEVTVESSFSQAEPPPPPPQVLVAGSTSN). Residues 243-292 (SRKSRTSPTERERRVHFNDRFFDLKNLIPNPTKIDRASIVGEAIDYIKEL) enclose the bHLH domain. The interval 315 to 338 (KRARVGEGGGGEDQEEEEDTVNYK) is disordered. Positions 324–334 (GGEDQEEEEDT) are enriched in acidic residues.

Homodimer.

Its subcellular location is the nucleus. This Arabidopsis thaliana (Mouse-ear cress) protein is Transcription factor bHLH10 (BHLH10).